The chain runs to 677 residues: Fidgetin-like protein 1 (677 aa).

The segment covering 203–216 has biased composition (polar residues); that stretch reads TSSAPSGESTTATF. 3 disordered regions span residues 203 to 232, 249 to 324, and 337 to 378; these read TSSA…PQSF, VPSG…SFNG, and GIFG…TDDR. A Glycyl lysine isopeptide (Lys-Gly) (interchain with G-Cter in SUMO2) cross-link involves residue K226. The span at 264-280 shows a compositional bias: polar residues; it reads DSDTINMLSNPTLNKAP. Residues 281-292 show a composition bias toward basic and acidic residues; sequence SKTEDSGQREDN. Residue K341 is modified to N6-acetyllysine. Polar residues predominate over residues 347–358; it reads SNKQDGSEQNGN. ATP-binding positions include A407 and 447–452; that span reads GTGKTL.

Belongs to the AAA ATPase family. In terms of assembly, hexamer. Interacts (via N-terminal one-half region) with RAD51; the interaction is direct. Interacts (via N-terminal one-half region) with SPIDR (via the C-terminal region); the interaction is direct. Interacts with FIRRM; may regulate homologous recombination. Requires Mg(2+) as cofactor.

The protein resides in the nucleus. It is found in the cytoplasm. It localises to the perinuclear region. It catalyses the reaction ATP + H2O = ADP + phosphate + H(+). Its function is as follows. Involved in DNA double-strand break (DBS) repair via homologous recombination (HR). Recruited at DSB sites independently of BRCA2, RAD51 and RAD51 paralogs in a H2AX-dependent manner. May regulate osteoblast proliferation and differentiation. May play a role in the control of male meiosis dynamic. This is Fidgetin-like protein 1 (Fignl1) from Rattus norvegicus (Rat).